A 282-amino-acid chain; its full sequence is Undecaprenyl-diphosphatase (282 aa).

Transmembrane regions (helical) follow at residues 51–71 (TLVA…AAVI), 87–107 (MGWM…LFET), 115–135 (SLYW…LAEG), 191–211 (ATAA…AGLY), 229–249 (NILV…AFLL), and 259–279 (IFIA…ATGV).

The protein belongs to the UppP family.

The protein resides in the cell inner membrane. The catalysed reaction is di-trans,octa-cis-undecaprenyl diphosphate + H2O = di-trans,octa-cis-undecaprenyl phosphate + phosphate + H(+). Its function is as follows. Catalyzes the dephosphorylation of undecaprenyl diphosphate (UPP). Confers resistance to bacitracin. The chain is Undecaprenyl-diphosphatase from Pelodictyon phaeoclathratiforme (strain DSM 5477 / BU-1).